The sequence spans 520 residues: Sodium-dependent dicarboxylate transporter SdcS (520 aa).

14 helical membrane passes run 30–50 (AGQL…LLFF), 55–75 (LPWK…WWIT), 77–97 (AIPI…GHIL), 104–124 (SEYG…AIAM), 160–180 (SMFV…LAII), 207–227 (IGYA…PLII), 242–262 (FAKW…ITWL), 298–318 (KVVQ…EFLL), 323–343 (VTSS…LFII), 362–382 (ELPW…KGIS), 399–419 (GVSP…LTEV), 428–448 (MILP…LLLM), 452–472 (AMAA…AIIF), and 491–511 (LISA…VLGI).

The protein belongs to the SLC13A/DASS transporter (TC 2.A.47) family. NADC subfamily.

It is found in the cell membrane. Its function is as follows. Mediates the transport of the dicarboxylates fumarate, malate, and succinate across the cytoplasmic membrane via a Na(+)-electrochemical gradient. This chain is Sodium-dependent dicarboxylate transporter SdcS (sdcS), found in Staphylococcus aureus (strain USA300).